The primary structure comprises 404 residues: Phosphopentomutase (404 aa).

Mn(2+)-binding residues include aspartate 10, aspartate 303, histidine 308, aspartate 344, histidine 345, and histidine 356.

This sequence belongs to the phosphopentomutase family. Mn(2+) is required as a cofactor.

It is found in the cytoplasm. It carries out the reaction 2-deoxy-alpha-D-ribose 1-phosphate = 2-deoxy-D-ribose 5-phosphate. The enzyme catalyses alpha-D-ribose 1-phosphate = D-ribose 5-phosphate. It participates in carbohydrate degradation; 2-deoxy-D-ribose 1-phosphate degradation; D-glyceraldehyde 3-phosphate and acetaldehyde from 2-deoxy-alpha-D-ribose 1-phosphate: step 1/2. Functionally, isomerase that catalyzes the conversion of deoxy-ribose 1-phosphate (dRib-1-P) and ribose 1-phosphate (Rib-1-P) to deoxy-ribose 5-phosphate (dRib-5-P) and ribose 5-phosphate (Rib-5-P), respectively. The sequence is that of Phosphopentomutase from Shewanella sp. (strain ANA-3).